The following is a 1841-amino-acid chain: Cell division control protein 12 (1841 aa).

2 stretches are compositionally biased toward polar residues: residues 1–25 (MRNS…TPSA) and 46–63 (SIES…QSVT). Disordered stretches follow at residues 1 to 63 (MRNS…QSVT), 78 to 134 (NSHN…GPRL), and 152 to 181 (PPVH…RTKH). The 389-residue stretch at 232 to 620 (TRPPSLDQLI…RILLNSKVSN (389 aa)) folds into the GBD/FH3 domain. Positions 674 to 715 (LGAEDLIAKLNKEVEDQKDVILSQKRTNETLKTEIDALQKSH) form a coiled coil. The FH1 domain occupies 740–972 (GSTNSKERII…VSPAVSNNIS (233 aa)). The 412-residue stretch at 980-1391 (TGLTRRPTRR…QHRRLNLVNN (412 aa)) folds into the FH2 domain. Residues 1260-1290 (TEAAKLNIEAIEQECSELIRGCQNLQIDCDS) adopt a coiled-coil conformation. Disordered regions lie at residues 1445–1661 (EAPN…ENNL), 1696–1715 (TTTT…INTI), and 1735–1758 (KSNK…GSNK). Composition is skewed to polar residues over residues 1447-1456 (PNTSTKSSPA) and 1483-1497 (SEST…NITP). The span at 1499–1516 (KKGEVSSKAKKGYNYEKR) shows a compositional bias: basic and acidic residues. The segment covering 1539-1553 (GRSASYTFSDPSSLE) has biased composition (polar residues). Phosphoserine is present on serine 1541. Tyrosine 1544 carries the phosphotyrosine modification. A compositionally biased stretch (basic and acidic residues) spans 1554 to 1567 (DSNRQKPFNGEKFR). Basic residues predominate over residues 1568-1577 (RFSSKSRRGS). Positions 1594 to 1604 (INNNQTSPQNK) are enriched in polar residues. The segment covering 1605–1621 (PSKESLKSDTISNEKKV) has biased composition (basic and acidic residues). Over residues 1630–1641 (NLLTPTISNGTR) the composition is skewed to polar residues.

It belongs to the formin homology family. BNI1 subfamily. As to quaternary structure, interacts with profilin and actin at the FH1 and FH2 domains respectively.

The protein resides in the nucleus. Its function is as follows. Plays a role in the cell cycle. Involved in cytokinesis. Component of the cell division ring. In the absence of profilin, caps the barbed end of actin filaments, thus preventing subunit addition and dissociation. In the presence of profilin, nucleates actin filaments that grow rapidly from their barbed ends. The sequence is that of Cell division control protein 12 (cdc12) from Schizosaccharomyces pombe (strain 972 / ATCC 24843) (Fission yeast).